Here is an 802-residue protein sequence, read N- to C-terminus: Outer membrane usher protein CssD (802 aa).

Belongs to the fimbrial export usher family.

The protein resides in the cell outer membrane. In terms of biological role, involved in the export and assembly of C6 fimbrial subunits across the outer membrane. This chain is Outer membrane usher protein CssD (cssD), found in Escherichia coli.